Reading from the N-terminus, the 348-residue chain is Protein RecA (348 aa).

An ATP-binding site is contributed by 65–72 (GPESSGKT). The tract at residues 326-348 (QMGSESLSSSSDDDDIKEESGEE) is disordered. Residues 336 to 348 (SDDDDIKEESGEE) show a composition bias toward acidic residues.

It belongs to the RecA family.

It localises to the cytoplasm. In terms of biological role, can catalyze the hydrolysis of ATP in the presence of single-stranded DNA, the ATP-dependent uptake of single-stranded DNA by duplex DNA, and the ATP-dependent hybridization of homologous single-stranded DNAs. It interacts with LexA causing its activation and leading to its autocatalytic cleavage. This chain is Protein RecA, found in Campylobacter hominis (strain ATCC BAA-381 / DSM 21671 / CCUG 45161 / LMG 19568 / NCTC 13146 / CH001A).